We begin with the raw amino-acid sequence, 205 residues long: Large ribosomal subunit protein uL18 (205 aa).

The protein belongs to the universal ribosomal protein uL18 family. As to quaternary structure, part of the 50S ribosomal subunit. Contacts the 5S and 23S rRNAs.

Functionally, this is one of the proteins that bind and probably mediate the attachment of the 5S RNA into the large ribosomal subunit, where it forms part of the central protuberance. In Pyrobaculum arsenaticum (strain DSM 13514 / JCM 11321 / PZ6), this protein is Large ribosomal subunit protein uL18.